A 596-amino-acid polypeptide reads, in one-letter code: Elongation factor 4 (596 aa).

Positions 2 to 184 constitute a tr-type G domain; the sequence is KHIRNFSIIA…VIVAKIPPPE (183 aa). GTP is bound by residues 14 to 19 and 131 to 134; these read DHGKST and NKID.

This sequence belongs to the TRAFAC class translation factor GTPase superfamily. Classic translation factor GTPase family. LepA subfamily.

It localises to the cell inner membrane. The catalysed reaction is GTP + H2O = GDP + phosphate + H(+). Its function is as follows. Required for accurate and efficient protein synthesis under certain stress conditions. May act as a fidelity factor of the translation reaction, by catalyzing a one-codon backward translocation of tRNAs on improperly translocated ribosomes. Back-translocation proceeds from a post-translocation (POST) complex to a pre-translocation (PRE) complex, thus giving elongation factor G a second chance to translocate the tRNAs correctly. Binds to ribosomes in a GTP-dependent manner. The polypeptide is Elongation factor 4 (Shewanella sp. (strain W3-18-1)).